The primary structure comprises 1396 residues: Helicase ARIP4 (1396 aa).

Positions 1–103 are disordered; the sequence is MSDASISGSE…LQKPANLRRN (103 aa). The segment covering 11 to 49 has biased composition (acidic residues); that stretch reads PELDPEDMEEEEEDDEDDDEEEEEEEDEEDNDGDDEDDK. Over residues 75 to 84 the composition is skewed to polar residues; sequence RSTTSGQSGQ. The region spanning 290-510 is the Helicase ATP-binding domain; it reads RFSGSSGFGC…WCMVDFVRPD (221 aa). Residue 303–310 coordinates ATP; the sequence is HSMGLGKT. The short motif at 461-464 is the DEAH box element; the sequence is DEGH. Positions 549-553 match the LXXLL motif 1 motif; it reads LHSLL. The Helicase C-terminal domain occupies 717-891; the sequence is KMVLLFHLIE…RVVDDLNPEV (175 aa). 2 disordered regions span residues 1117–1168 and 1194–1250; these read SGKQ…PDSP and NLGL…STMN. Polar residues-rich tracts occupy residues 1128–1148 and 1218–1238; these read QATS…RHST and DQSS…SYPN. The short motif at 1273-1277 is the LXXLL motif 2 element; that stretch reads LPSLL. Residues 1340-1396 form a disordered region; the sequence is GLPTNNPASTFPGYLSSHSNYQASPGTSSRPLPSGETELGSCEEDGRDDDVVEVTGE. The span at 1355–1370 shows a compositional bias: polar residues; the sequence is SSHSNYQASPGTSSRP. Over residues 1380–1396 the composition is skewed to acidic residues; that stretch reads SCEEDGRDDDVVEVTGE.

Belongs to the SNF2/RAD54 helicase family.

Its subcellular location is the nucleus. The enzyme catalyses ATP + H2O = ADP + phosphate + H(+). DNA helicase that modulates androgen receptor (AR)-dependent transactivation in a promoter-dependent manner. This Xenopus tropicalis (Western clawed frog) protein is Helicase ARIP4 (rad54l2).